Consider the following 224-residue polypeptide: Phosphoribosylformylglycinamidine synthase subunit PurQ (224 aa).

Positions 2 to 224 (TVAIIRFGGS…DGQGVLEGFR (223 aa)) constitute a Glutamine amidotransferase type-1 domain. Cys85 acts as the Nucleophile in catalysis. Residues His202 and Glu204 contribute to the active site. The tract at residues 204–224 (ERASLPDIGPTDGQGVLEGFR) is disordered.

As to quaternary structure, part of the FGAM synthase complex composed of 1 PurL, 1 PurQ and 2 PurS subunits.

The protein resides in the cytoplasm. It carries out the reaction N(2)-formyl-N(1)-(5-phospho-beta-D-ribosyl)glycinamide + L-glutamine + ATP + H2O = 2-formamido-N(1)-(5-O-phospho-beta-D-ribosyl)acetamidine + L-glutamate + ADP + phosphate + H(+). The enzyme catalyses L-glutamine + H2O = L-glutamate + NH4(+). Its pathway is purine metabolism; IMP biosynthesis via de novo pathway; 5-amino-1-(5-phospho-D-ribosyl)imidazole from N(2)-formyl-N(1)-(5-phospho-D-ribosyl)glycinamide: step 1/2. Its function is as follows. Part of the phosphoribosylformylglycinamidine synthase complex involved in the purines biosynthetic pathway. Catalyzes the ATP-dependent conversion of formylglycinamide ribonucleotide (FGAR) and glutamine to yield formylglycinamidine ribonucleotide (FGAM) and glutamate. The FGAM synthase complex is composed of three subunits. PurQ produces an ammonia molecule by converting glutamine to glutamate. PurL transfers the ammonia molecule to FGAR to form FGAM in an ATP-dependent manner. PurS interacts with PurQ and PurL and is thought to assist in the transfer of the ammonia molecule from PurQ to PurL. This is Phosphoribosylformylglycinamidine synthase subunit PurQ from Natronomonas pharaonis (strain ATCC 35678 / DSM 2160 / CIP 103997 / JCM 8858 / NBRC 14720 / NCIMB 2260 / Gabara) (Halobacterium pharaonis).